Reading from the N-terminus, the 535-residue chain is CTP synthase (535 aa).

The segment at 1–266 (MKTKFIFITG…DEQVVEKLNI (266 aa)) is amidoligase domain. A CTP-binding site is contributed by Ser-14. Ser-14 serves as a coordination point for UTP. ATP is bound by residues 15-20 (SIGKGL) and Asp-72. Asp-72 and Glu-140 together coordinate Mg(2+). CTP contacts are provided by residues 147 to 149 (DIE), 187 to 192 (KTKPTQ), and Lys-223. UTP-binding positions include 187-192 (KTKPTQ) and Lys-223. A Glutamine amidotransferase type-1 domain is found at 292-534 (RIAIVGKYVN…IGASLTHRNQ (243 aa)). Position 354 (Gly-354) interacts with L-glutamine. Cys-381 acts as the Nucleophile; for glutamine hydrolysis in catalysis. L-glutamine is bound by residues 382–385 (LGMQ), Glu-405, and Arg-462. Active-site residues include His-507 and Glu-509.

The protein belongs to the CTP synthase family. In terms of assembly, homotetramer.

The catalysed reaction is UTP + L-glutamine + ATP + H2O = CTP + L-glutamate + ADP + phosphate + 2 H(+). The enzyme catalyses L-glutamine + H2O = L-glutamate + NH4(+). It carries out the reaction UTP + NH4(+) + ATP = CTP + ADP + phosphate + 2 H(+). It functions in the pathway pyrimidine metabolism; CTP biosynthesis via de novo pathway; CTP from UDP: step 2/2. Its activity is regulated as follows. Allosterically activated by GTP, when glutamine is the substrate; GTP has no effect on the reaction when ammonia is the substrate. The allosteric effector GTP functions by stabilizing the protein conformation that binds the tetrahedral intermediate(s) formed during glutamine hydrolysis. Inhibited by the product CTP, via allosteric rather than competitive inhibition. Functionally, catalyzes the ATP-dependent amination of UTP to CTP with either L-glutamine or ammonia as the source of nitrogen. Regulates intracellular CTP levels through interactions with the four ribonucleotide triphosphates. This Trichlorobacter lovleyi (strain ATCC BAA-1151 / DSM 17278 / SZ) (Geobacter lovleyi) protein is CTP synthase.